Reading from the N-terminus, the 517-residue chain is MKHKLQMMKMRWLSAAVMLTLYTSSSWAFSIDDVAKQAQSLAGKGYEAPKSNLPSVFRDMKYADYQQIQFNHDKAYWNNLKTPFKLEFYHQGMYFDTPVKINEVTATAVKRIKYSPDYFTFGDVQHDKDTVKDLGFAGFKVLYPINSKDKNDEIVSMLGASYFRVIGAGQVYGLSARGLAIDTALPSGEEFPRFKEFWIERPKPTDKRLTIYALLDSPRATGAYKFVVMPGRDTVVDVQSKIYLRDKVGKLGVAPLTSMFLFGPNQPSPANNYRPELHDSNGLSIHAGNGEWIWRPLNNPKHLAVSSFSMENPQGFGLLQRGRDFSRFEDLDDRYDLRPSAWVTPKGEWGKGSVELVEIPTNDETNDNIVAYWTPDQLPEPGKEMNFKYTITFSRDEDKLHAPDNAWVQQTRRSTGDVKQSNLIRQPDGTIAFVVDFTGAEMKKLPEDTPVTAQTSIGDNGEIVESTVRYNPVTKGWRLVMRVKVKDAKKTTEMRAALVNADQTLSETWSYQLPANE.

The signal sequence occupies residues 1-28; sequence MKHKLQMMKMRWLSAAVMLTLYTSSSWA.

The protein belongs to the OpgD/OpgG family.

The protein localises to the periplasm. It participates in glycan metabolism; osmoregulated periplasmic glucan (OPG) biosynthesis. Its function is as follows. Involved in the biosynthesis of osmoregulated periplasmic glucans (OPGs). In Escherichia coli O1:K1 / APEC, this protein is Glucans biosynthesis protein G.